A 301-amino-acid chain; its full sequence is GTPase Era (301 aa).

Residues lysine 4–proline 173 enclose the Era-type G domain. The segment at glycine 12 to serine 19 is G1. Glycine 12–serine 19 lines the GTP pocket. A G2 region spans residues asparagine 38–lysine 42. The segment at aspartate 64–glycine 67 is G3. Residues aspartate 64–leucine 68 and serine 122–aspartate 125 contribute to the GTP site. The tract at residues serine 122–aspartate 125 is G4. Positions leucine 152–alanine 154 are G5. Residues leucine 204–lysine 280 enclose the KH type-2 domain.

This sequence belongs to the TRAFAC class TrmE-Era-EngA-EngB-Septin-like GTPase superfamily. Era GTPase family. As to quaternary structure, monomer.

It is found in the cytoplasm. Its subcellular location is the cell inner membrane. An essential GTPase that binds both GDP and GTP, with rapid nucleotide exchange. Plays a role in 16S rRNA processing and 30S ribosomal subunit biogenesis and possibly also in cell cycle regulation and energy metabolism. This Helicobacter pylori (strain P12) protein is GTPase Era.